The primary structure comprises 395 residues: Elongation factor Tu (395 aa).

One can recognise a tr-type G domain in the interval 10-204 (KPHLNIGTIG…AVDNWIEEPV (195 aa)). Residues 19-26 (GHVDHGKT) are G1. 19–26 (GHVDHGKT) lines the GTP pocket. Thr26 lines the Mg(2+) pocket. The G2 stretch occupies residues 60–64 (GITIN). A G3 region spans residues 81–84 (DCPG). GTP-binding positions include 81–85 (DCPGH) and 136–139 (NKVD). The G4 stretch occupies residues 136 to 139 (NKVD). The interval 174 to 176 (SAL) is G5.

This sequence belongs to the TRAFAC class translation factor GTPase superfamily. Classic translation factor GTPase family. EF-Tu/EF-1A subfamily. As to quaternary structure, monomer.

It is found in the cytoplasm. It carries out the reaction GTP + H2O = GDP + phosphate + H(+). In terms of biological role, GTP hydrolase that promotes the GTP-dependent binding of aminoacyl-tRNA to the A-site of ribosomes during protein biosynthesis. This chain is Elongation factor Tu, found in Flavobacterium johnsoniae (strain ATCC 17061 / DSM 2064 / JCM 8514 / BCRC 14874 / CCUG 350202 / NBRC 14942 / NCIMB 11054 / UW101) (Cytophaga johnsonae).